Here is a 392-residue protein sequence, read N- to C-terminus: GTPase Obg (392 aa).

Positions M1 to L159 constitute an Obg domain. An OBG-type G domain is found at A160–D333. GTP contacts are provided by residues G166–S173, F191–I195, D213–G216, N283–D286, and A314–V316. S173 and T193 together coordinate Mg(2+). The segment at G364–D392 is disordered. A compositionally biased stretch (acidic residues) spans E370–D384.

This sequence belongs to the TRAFAC class OBG-HflX-like GTPase superfamily. OBG GTPase family. As to quaternary structure, monomer. Requires Mg(2+) as cofactor.

Its subcellular location is the cytoplasm. In terms of biological role, an essential GTPase which binds GTP, GDP and possibly (p)ppGpp with moderate affinity, with high nucleotide exchange rates and a fairly low GTP hydrolysis rate. Plays a role in control of the cell cycle, stress response, ribosome biogenesis and in those bacteria that undergo differentiation, in morphogenesis control. The polypeptide is GTPase Obg (Aliivibrio salmonicida (strain LFI1238) (Vibrio salmonicida (strain LFI1238))).